Reading from the N-terminus, the 438-residue chain is ATP synthase subunit alpha, chloroplastic (438 aa).

An ATP-binding site is contributed by 170-177; sequence GDRQTGKT.

Belongs to the ATPase alpha/beta chains family. In terms of assembly, F-type ATPases have 2 components, CF(1) - the catalytic core - and CF(0) - the membrane proton channel. CF(1) has five subunits: alpha(3), beta(3), gamma(1), delta(1), epsilon(1). CF(0) has four main subunits: a, b, b' and c.

The protein resides in the plastid. It localises to the chloroplast thylakoid membrane. The catalysed reaction is ATP + H2O + 4 H(+)(in) = ADP + phosphate + 5 H(+)(out). In terms of biological role, produces ATP from ADP in the presence of a proton gradient across the membrane. The alpha chain is a regulatory subunit. The sequence is that of ATP synthase subunit alpha, chloroplastic from Ochrosphaera neapolitana.